A 536-amino-acid chain; its full sequence is Feruloyl esterase B (536 aa).

An N-terminal signal peptide occupies residues 1–20 (MKTSIVLSIVALFLTSKASA). The CBM10 domain occupies 21 to 59 (DCWSERLGWPCCSDSNAEVIYVDDDGDWGVENNDWCGIQ). The segment at 22-59 (CWSERLGWPCCSDSNAEVIYVDDDGDWGVENNDWCGIQ) is cellulose-binding. N-linked (GlcNAc...) asparagine glycosylation is present at Asn65. Repeat copies occupy residues 78–90 (NQGGGMPWGDFGG), 91–103 (NQGGGMQWGDFGG), 104–116 (NQGGGMPWGDFGG), 117–129 (NQGGGMPWGDFGG), 134–146 (NQGGGMPWGDFGG), 151–163 (NQGGGMPWGDFGG), 164–176 (NQGGGMQWGDFGG), 181–193 (NQGGGMPWGDFGG), 194–206 (NQGGGMQWGDFGG), 211–223 (NQGGGMPWGDFGG), 224–236 (NQGGGMQWGDFGG), and 237–249 (NQGGGMQWGDFGG). The interval 78-249 (NQGGGMPWGD…GGMQWGDFGG (172 aa)) is 12 X 13 AA repeats of N-Q-G-G-G-M-[PQ]-W-G-D-F-G-G. A compositionally biased stretch (gly residues) spans 203 to 252 (DFGGNQGGNQGGGMPWGDFGGNQGGGMQWGDFGGNQGGGMQWGDFGGNQG). The segment at 203-273 (DFGGNQGGNQ…SGPTVEYSTD (71 aa)) is disordered. A catalytic region spans residues 257–536 (WGNQGGNSGP…WDFVKQFSLP (280 aa)).

As to quaternary structure, component of the multienzyme cellulase-hemicellulase complex.

The protein localises to the secreted. The enzyme catalyses feruloyl-polysaccharide + H2O = ferulate + polysaccharide.. Its activity is regulated as follows. Inhibited by the specific serine esterase inhibitor AEBSF. Its function is as follows. Involved in degradation of plant cell walls. Hydrolyzes of the feruloyl-arabinose ester bond in arabinoxylans as well as the feruloyl-galactose and feruloyl-arabinose ester bonds in pectin. The sequence is that of Feruloyl esterase B (ESTA) from Piromyces equi.